Consider the following 241-residue polypeptide: Demethylmenaquinone methyltransferase (241 aa).

S-adenosyl-L-methionine contacts are provided by residues threonine 60, aspartate 81, and 106–107 (DA).

Belongs to the class I-like SAM-binding methyltransferase superfamily. MenG/UbiE family.

It carries out the reaction a 2-demethylmenaquinol + S-adenosyl-L-methionine = a menaquinol + S-adenosyl-L-homocysteine + H(+). The protein operates within quinol/quinone metabolism; menaquinone biosynthesis; menaquinol from 1,4-dihydroxy-2-naphthoate: step 2/2. Methyltransferase required for the conversion of demethylmenaquinol (DMKH2) to menaquinol (MKH2). The chain is Demethylmenaquinone methyltransferase from Staphylococcus aureus (strain Mu3 / ATCC 700698).